A 134-amino-acid chain; its full sequence is Secreted RxLR effector protein 1 (134 aa).

The N-terminal stretch at 1–22 (MFCRSPLVAVILLVLATHIVLA) is a signal peptide. Residues 32–60 (SETVPSDSSQTTRKSTRRTTSVDNKRRLR) are disordered. Over residues 37-52 (SDSSQTTRKSTRRTTS) the composition is skewed to low complexity. Residues 57–79 (RRLRQQIMGKDGPVVNDVHAEER) carry the RxLR-dEER motif.

This sequence belongs to the RxLR effector family.

The protein localises to the secreted. It is found in the host nucleus. Its function is as follows. Effector that acts as a broad suppressor of cell death to interrupt plant immunity. Inhibits cell death induced by cell death-inducing proteins, including the PAMP elicitor INF1 from P.infestans. The sequence is that of Secreted RxLR effector protein 1 from Plasmopara viticola (Downy mildew of grapevine).